A 304-amino-acid polypeptide reads, in one-letter code: Probable 5-dehydro-4-deoxyglucarate dehydratase (304 aa).

Belongs to the DapA family.

It catalyses the reaction 5-dehydro-4-deoxy-D-glucarate + H(+) = 2,5-dioxopentanoate + CO2 + H2O. The protein operates within carbohydrate acid metabolism; D-glucarate degradation; 2,5-dioxopentanoate from D-glucarate: step 2/2. The polypeptide is Probable 5-dehydro-4-deoxyglucarate dehydratase (Arthrobacter sp. (strain FB24)).